Consider the following 128-residue polypeptide: Small ribosomal subunit protein uS13 (128 aa).

Basic residues predominate over residues 95 to 118 (GLPVRGQRTHTNARTRKGPKKGLV). Residues 95–128 (GLPVRGQRTHTNARTRKGPKKGLVRKAAAPAPKA) form a disordered region.

The protein belongs to the universal ribosomal protein uS13 family. In terms of assembly, part of the 30S ribosomal subunit. Forms a loose heterodimer with protein S19. Forms two bridges to the 50S subunit in the 70S ribosome.

Its function is as follows. Located at the top of the head of the 30S subunit, it contacts several helices of the 16S rRNA. In the 70S ribosome it contacts the 23S rRNA (bridge B1a) and protein L5 of the 50S subunit (bridge B1b), connecting the 2 subunits; these bridges are implicated in subunit movement. Contacts the tRNAs in the A and P-sites. The polypeptide is Small ribosomal subunit protein uS13 (Anaeromyxobacter sp. (strain K)).